A 244-amino-acid chain; its full sequence is High frequency lysogenization protein HflD homolog (244 aa).

It belongs to the HflD family.

It is found in the cytoplasm. The protein localises to the cell inner membrane. This Acinetobacter baumannii (strain SDF) protein is High frequency lysogenization protein HflD homolog.